Consider the following 156-residue polypeptide: Protein-export protein SecB (156 aa).

The protein belongs to the SecB family. In terms of assembly, homotetramer, a dimer of dimers. One homotetramer interacts with 1 SecA dimer.

The protein localises to the cytoplasm. Functionally, one of the proteins required for the normal export of preproteins out of the cell cytoplasm. It is a molecular chaperone that binds to a subset of precursor proteins, maintaining them in a translocation-competent state. It also specifically binds to its receptor SecA. The polypeptide is Protein-export protein SecB (Aeromonas hydrophila subsp. hydrophila (strain ATCC 7966 / DSM 30187 / BCRC 13018 / CCUG 14551 / JCM 1027 / KCTC 2358 / NCIMB 9240 / NCTC 8049)).